The chain runs to 184 residues: Large ribosomal subunit protein eL18 (184 aa).

This sequence belongs to the eukaryotic ribosomal protein eL18 family.

It localises to the cytoplasm. The polypeptide is Large ribosomal subunit protein eL18 (RPL18) (Theileria parva (East coast fever infection agent)).